We begin with the raw amino-acid sequence, 204 residues long: Viral interleukin-6 homolog (204 aa).

Residues 1-22 form the signal peptide; that stretch reads MRWFKLWSILLVGSLLVSGTRG.

The protein belongs to the IL-6 superfamily. In terms of assembly, interacts with host IL6ST.

In terms of biological role, initiates signal transduction through binding to interleukin-6 receptor subunit beta IL6ST, independently of the cognate IL6 receptor IL6R. In infected primary effusion lymphoma cells, promotes proliferation of cells, protects them from apoptosis, and promotes immune evasion of interferon activity. Also drives blood to lymphatic endothelial cell differentiation. In Homo sapiens (Human), this protein is Viral interleukin-6 homolog (K2).